The chain runs to 115 residues: Virulence-associated protein A' (115 aa).

The 55-residue stretch at 16–70 (IKSDLDGLGINITEAAKALDVTRAALSEIINGKRGISAKMAWKLSKAFTNSDPEF) folds into the HTH cro/C1-type domain. Residues 27 to 46 (ITEAAKALDVTRAALSEIIN) constitute a DNA-binding region (H-T-H motif).

Belongs to the VapA/VapI family.

In Dichelobacter nodosus (Bacteroides nodosus), this protein is Virulence-associated protein A' (vapA').